Consider the following 251-residue polypeptide: Maleate isomerase (251 aa).

Substrate contacts are provided by residues N15, C81–V83, Y138, and N168. The Nucleophile role is filled by C81. An S-(2-succinyl)cysteine modification is found at C81. The Proton donor role is filled by C199. V200–Q201 contributes to the substrate binding site.

It belongs to the maleate isomerase family. Homodimer.

The catalysed reaction is maleate = fumarate. Its function is as follows. Catalyzes cis-trans isomerization of the C2-C3 double bond in maleate to yield fumarate. The polypeptide is Maleate isomerase (Geobacillus stearothermophilus (Bacillus stearothermophilus)).